A 588-amino-acid chain; its full sequence is Vesicular glutamate transporter 3 (588 aa).

The Cytoplasmic portion of the chain corresponds to 1-76 (MPFNAFDTFK…CSCCGIPKRY (76 aa)). The chain crosses the membrane as a helical span at residues 77–97 (IIAVMSGLGFCISFGIRCNLG). At 98 to 130 (VAIVEMVNNSTVYVDGKPEIQTAQFNWDPETVG) the chain is on the vesicular side. N-linked (GlcNAc...) asparagine glycosylation occurs at asparagine 106. A helical transmembrane segment spans residues 131–151 (LIHGSFFWGYIVTQIPGGFIS). Residues 152–153 (NK) lie on the Cytoplasmic side of the membrane. The helical transmembrane segment at 154 to 174 (FAANRVFGAAIFLTSTLNMFI) threads the bilayer. The Vesicular segment spans residues 175–182 (PSAARVHY). The chain crosses the membrane as a helical span at residues 183-203 (GCVMCVRILQGLVEGVTYPAC). The Cytoplasmic segment spans residues 204–221 (HGMWSKWAPPLERSRLAT). A helical transmembrane segment spans residues 222-242 (TSFCGSYAGAVVAMPLAGVLV). Topologically, residues 243 to 249 (QYIGWAS) are vesicular. The chain crosses the membrane as a helical span at residues 250 to 270 (VFYIYGMFGIIWYMFWLLQAY). Residues 271–314 (ECPAVHPTISNEERTYIETSIGEGANLASLSKFNTPWRRFFTSL) lie on the Cytoplasmic side of the membrane. Residues 315–335 (PVYAIIVANFCRSWTFYLLLI) form a helical membrane-spanning segment. The Vesicular portion of the chain corresponds to 336 to 353 (SQPAYFEEVFGFAISKVG). A helical transmembrane segment spans residues 354–374 (LLSAVPHMVMTIVVPIGGQLA). The Cytoplasmic portion of the chain corresponds to 375–390 (DYLRSRKILTTTAVRK). Residues 391–411 (IMNCGGFGMEATLLLVVGFSH) form a helical membrane-spanning segment. Residues 412-413 (TK) are Vesicular-facing. Residues 414–434 (GVAISFLVLAVGFSGFAISGF) traverse the membrane as a helical segment. Over 435–447 (NVNHLDIAPRYAS) the chain is Cytoplasmic. The helical transmembrane segment at 448 to 468 (ILMGISNGVGTLSGMVCPLIV) threads the bilayer. Residues 469 to 481 (GAMTKHKTREEWQ) lie on the Vesicular side of the membrane. Residues 482–502 (NVFLIAALVHYSGVIFYGVFA) traverse the membrane as a helical segment. The Cytoplasmic segment spans residues 503–585 (SGEKQDWADP…LSYQNEEDFS (83 aa)). Residues 539–588 (FVSPRKKMSYGATTQNCEVQKTDRRQQRESAFEGEEPLSYQNEEDFSETS) form a disordered region. The span at 558 to 569 (QKTDRRQQRESA) shows a compositional bias: basic and acidic residues. Residues 570 to 588 (FEGEEPLSYQNEEDFSETS) are compositionally biased toward acidic residues.

Belongs to the major facilitator superfamily. Sodium/anion cotransporter family. VGLUT subfamily. In terms of tissue distribution, expressed in brain, kidney and liver. Expressed within the amygdala, brainstem, cerberal cortex, dorsal root ganglia, dorsal spinal cord, hippocampus, hypothalamus, retina, striatum and ventral spinal cord. Expressed within neurons of the caudate-putamen, olfactory tubercle, nucleus accumbens, hippocampus, interpeduncular nucleus and dorsal and medial raphe nuclei. Expressed in inner hair cells of the ear. Expressed at synaptic terminals within the lateral superior olive (LSO), a nucleus of the mammalian sound localization system, and in the medial nucleus of the trapezoid body (MNTB), which provides inhibitory input to the LSO.

It is found in the cytoplasmic vesicle. The protein localises to the secretory vesicle. Its subcellular location is the synaptic vesicle membrane. It localises to the cell membrane. The protein resides in the synapse. It is found in the synaptosome. It carries out the reaction L-glutamate(out) = L-glutamate(in). The enzyme catalyses chloride(in) = chloride(out). The catalysed reaction is 3 Na(+)(out) + phosphate(out) = 3 Na(+)(in) + phosphate(in). The L-glutamate uniporter activity exhibits a biphasic dependence on chloride concentration. Chloride channel activity is allosterically activated by lumenal H(+) and Cl(-) leading to synaptic vesicles acidification. The glutamate transport activity is allosterically activated by lumenal H(+) and Cl(-), preventing non-vesicular L-glutamate release. Its function is as follows. Multifunctional transporter that transports L-glutamate as well as multiple ions such as chloride, sodium and phosphate. At the synaptic vesicle membrane, mainly functions as an uniporter that mediates the uptake of L-glutamate into synaptic vesicles at presynaptic nerve terminals of excitatory neural cells. The L-glutamate uniporter activity is electrogenic and is driven by the proton electrochemical gradient, mainly by the electrical gradient established by the vacuolar H(+)-ATPase across the synaptic vesicle membrane. In addition, functions as a chloride channel that allows a chloride permeation through the synaptic vesicle membrane that affects the proton electrochemical gradient and promotes synaptic vesicles acidification. At the plasma membrane, following exocytosis, functions as a symporter of Na(+) and phosphate from the extracellular space to the cytoplasm allowing synaptic phosphate homeostasis regulation. The symporter activity is electrogenic. Moreover, operates synergistically with SLC18A3/VACHT under a constant H(+) gradient, thereby allowing striatal vesicular acetylcholine uptake. The chain is Vesicular glutamate transporter 3 from Rattus norvegicus (Rat).